A 94-amino-acid chain; its full sequence is Large ribosomal subunit protein bL28A (94 aa).

The segment at 63-94 (GHRGRRRAARAGSAPAHFARQAGSSLRTAAIL) is disordered. Residues 72–82 (RAGSAPAHFAR) are compositionally biased toward low complexity. Positions 84–94 (AGSSLRTAAIL) are enriched in polar residues.

This sequence belongs to the bacterial ribosomal protein bL28 family.

The protein is Large ribosomal subunit protein bL28A (rpmB1) of Mycobacterium bovis (strain ATCC BAA-935 / AF2122/97).